The chain runs to 371 residues: 4-hydroxy-3-methylbut-2-en-1-yl diphosphate synthase (flavodoxin) (371 aa).

Residues C270, C273, C305, and E312 each coordinate [4Fe-4S] cluster.

The protein belongs to the IspG family. It depends on [4Fe-4S] cluster as a cofactor.

The enzyme catalyses (2E)-4-hydroxy-3-methylbut-2-enyl diphosphate + oxidized [flavodoxin] + H2O + 2 H(+) = 2-C-methyl-D-erythritol 2,4-cyclic diphosphate + reduced [flavodoxin]. Its pathway is isoprenoid biosynthesis; isopentenyl diphosphate biosynthesis via DXP pathway; isopentenyl diphosphate from 1-deoxy-D-xylulose 5-phosphate: step 5/6. In terms of biological role, converts 2C-methyl-D-erythritol 2,4-cyclodiphosphate (ME-2,4cPP) into 1-hydroxy-2-methyl-2-(E)-butenyl 4-diphosphate. The protein is 4-hydroxy-3-methylbut-2-en-1-yl diphosphate synthase (flavodoxin) of Shewanella denitrificans (strain OS217 / ATCC BAA-1090 / DSM 15013).